Reading from the N-terminus, the 116-residue chain is Small ribosomal subunit protein bS16 (116 aa).

It belongs to the bacterial ribosomal protein bS16 family.

This Chlamydia trachomatis serovar L2 (strain ATCC VR-902B / DSM 19102 / 434/Bu) protein is Small ribosomal subunit protein bS16.